Here is a 280-residue protein sequence, read N- to C-terminus: F420-dependent methylenetetrahydromethanopterin dehydrogenase (280 aa).

It belongs to the MTD family.

It carries out the reaction 5,10-methylenetetrahydromethanopterin + oxidized coenzyme F420-(gamma-L-Glu)(n) + 2 H(+) = 5,10-methenyl-5,6,7,8-tetrahydromethanopterin + reduced coenzyme F420-(gamma-L-Glu)(n). Its pathway is one-carbon metabolism; methanogenesis from CO(2); 5,10-methylene-5,6,7,8-tetrahydromethanopterin from 5,10-methenyl-5,6,7,8-tetrahydromethanopterin (coenzyme F420 route): step 1/1. Its function is as follows. Catalyzes the reversible reduction of methenyl-H(4)MPT(+) to methylene-H(4)MPT. The polypeptide is F420-dependent methylenetetrahydromethanopterin dehydrogenase (Methanosphaerula palustris (strain ATCC BAA-1556 / DSM 19958 / E1-9c)).